The primary structure comprises 256 residues: Protein FixA (256 aa).

The protein belongs to the ETF beta-subunit/FixA family. In terms of assembly, heterodimer of FixA and FixB.

It functions in the pathway amine and polyamine metabolism; carnitine metabolism. Required for anaerobic carnitine reduction. May bring reductant to CaiA. The chain is Protein FixA from Salmonella paratyphi A (strain ATCC 9150 / SARB42).